The chain runs to 349 residues: uncharacterized protein (349 aa).

The next 10 membrane-spanning stretches (helical) occupy residues valine 15–threonine 35, isoleucine 53–isoleucine 73, tryptophan 91–serine 111, asparagine 120–leucine 140, leucine 147–valine 167, phenylalanine 179–leucine 199, leucine 218–methionine 238, tryptophan 248–leucine 268, isoleucine 276–leucine 296, and alanine 302–leucine 322. 2 EamA domains span residues isoleucine 39–phenylalanine 164 and phenylalanine 191–isoleucine 319.

The protein belongs to the EamA transporter family.

It is found in the cell membrane. This is an uncharacterized protein from Synechocystis sp. (strain ATCC 27184 / PCC 6803 / Kazusa).